We begin with the raw amino-acid sequence, 166 residues long: Large ribosomal subunit protein uL10 (166 aa).

The protein belongs to the universal ribosomal protein uL10 family. As to quaternary structure, part of the ribosomal stalk of the 50S ribosomal subunit. The N-terminus interacts with L11 and the large rRNA to form the base of the stalk. The C-terminus forms an elongated spine to which L12 dimers bind in a sequential fashion forming a multimeric L10(L12)X complex.

In terms of biological role, forms part of the ribosomal stalk, playing a central role in the interaction of the ribosome with GTP-bound translation factors. This Bacillus cereus (strain ATCC 14579 / DSM 31 / CCUG 7414 / JCM 2152 / NBRC 15305 / NCIMB 9373 / NCTC 2599 / NRRL B-3711) protein is Large ribosomal subunit protein uL10.